We begin with the raw amino-acid sequence, 962 residues long: MYQIPVKNLTKLRRPRKRVKSILCDIGMQQCQDMLETYKCFDAGDASFDNTEWDDFTDGHVGKKKKKYPYRSQSLCCSLCWYSSRSVPTFRSHIHRCHWKNLDGACLLMCPYCPFVSSPKVTEQHIQFFHMLPSRAHQSHPSHTLAHTPKTISVTVSADAADDRYTCATCGYHDSLLYVMKKHVLVNHFATLLDRYFGLGSESAPMAGPQIRDGTPVKYHCKLCKLPAETIEHLLYHILSSEKHKELHWQIMPCIIEKECMNQMVGLQNLLNLAPKSMQPVTLFARPNYMPQQTQQTNGNGTVLLAGPSNAAALFCSPGAGQMFLSPQTQALLSGTTVAALQNAPHPQSPGGMSQVLPTSPVVKPLNMVMPNMPQNTPKTLPLTMTVPRLPPPQQGPQVLLPPGVQVNLPGEMGVHSPFLVTQGLQLNQSVPRAPLITSQSVRFIPTGNKVNGVPTYTLAPVQVTVPVHGGPPQMVLAQNQISQPPNSAVVTPGLMPPVQRAMNKNSRPNELAVQAPFLKKHDNQTVKCLRCKILLTEQGIFQHLLHGLKCLFCPQMFYSFKQIMEHSKKEHSLKVKDNRLYIKEQFSLDCDDEGNLIFSTFNLNTDVPKDLLDNRELNLALVTSTKDKIYIKMYPDKAEYTTMLKSAPNACPFCQVKLQNPEDYELHLQTKHHIVPTIHAILKTPAYKCIYCFGVYTEKSTPKTISIHVQRCRCAPKAVKEAERKLNPDTSESHDGDVCSSVQMPASEVTFQGAPEFPKPKKEAVTPRNRRRNTKASKTGTLVPETPVTLVLEPMGMERTSFEDRKDFLSQYFHRKPYVTKTEIELLASRLWINKADVKAHFNSKLTKCLKAIQKKRVCVRLGFKMIEVNKLKHNLFIPEVKPVKRKDPNEVNLSSLVPGVTVKTEQVDATTQHPLFIPEVPVTIKKEEEVCEIDHGFIIQEVTVKQEEVDEMEDALCTNG.

A C2H2-type 1 zinc finger spans residues leucine 75–histidine 98. A C2H2-type 2; degenerate zinc finger spans residues leucine 108 to histidine 130. A C2H2-type 3; degenerate zinc finger spans residues tyrosine 165–histidine 188. Residues tyrosine 219–histidine 244 form a C2H2-type 4 zinc finger. Residues valine 527–histidine 547 form a C2H2-type 5; degenerate zinc finger. 2 consecutive C2H2-type zinc fingers follow at residues leucine 549–histidine 572 and asparagine 650–histidine 673. The C2H2-type 8; degenerate zinc finger occupies tyrosine 688–arginine 712. The segment at glutamine 753–glycine 781 is disordered. The segment at residues proline 795–isoleucine 854 is a DNA-binding region (homeobox).

It localises to the nucleus. In terms of biological role, may be involved in transcriptional regulation. Required for progression through late erythroid differentiation. May be involved in vasculogenesis. This Danio rerio (Zebrafish) protein is Activity-dependent neuroprotective protein 2a.